We begin with the raw amino-acid sequence, 93 residues long: Small ribosomal subunit protein uS19 (93 aa).

The protein belongs to the universal ribosomal protein uS19 family.

Functionally, protein S19 forms a complex with S13 that binds strongly to the 16S ribosomal RNA. The chain is Small ribosomal subunit protein uS19 from Limosilactobacillus fermentum (strain NBRC 3956 / LMG 18251) (Lactobacillus fermentum).